The sequence spans 469 residues: MGSKSVVDMIEAASRAHFSGLHVNGHMNGLEPSALKETTSASEDIQRQPFVIGVAGGAASGKTTVCDMIIQQLHDQRVVLINLDSFYHNLTEEELARVHEYNFDHPDAFDTEHLLSCMEKLRQGQAVDIPKYDFKTYRSSVFRRVNPTDVIILEGILLFHDPRVRKLMNMKIFVCTDADVRLARRIKRDTVENGRDIGTVLDQYSKFVKPAFDDFILPTKKYADIIIPRGGDNHVAIDLIVQHICTKLGQHDLCKIYPNLYVIHSTFQIRGMHTLIRDSQTTKHDFVFYSDRLIRLVVEHGLGHLPFTEKQVITPTGCVYSGVDFCKRLCGVSVIRSGESMENALRACCKGIKIGKILIHREGDNGQQLVYEKLPNDISERHVLLLDPILGTGNSAVEAINLLISKGVPEGNIIFLNLISAPQGVHVVCKKFPRIKIVTSEIDNGLNEEFRVIPGMGEFGDRYFGTDDD.

Positions 46-249 (QRQPFVIGVA…IVQHICTKLG (204 aa)) are uridine kinase. Residues 259–469 (NLYVIHSTFQ…GDRYFGTDDD (211 aa)) are uracil phosphoribosyltransferase. Residues Lys283, Arg292, and 326–329 (CKRL) each bind GTP. Residues Arg336 and Arg361 each coordinate 5-phospho-alpha-D-ribose 1-diphosphate. Arg381 lines the GTP pocket. 5-phospho-alpha-D-ribose 1-diphosphate contacts are provided by residues Asp387, 392–395 (TGNS), and Glu458. 457-459 (GEF) provides a ligand contact to uracil.

This sequence in the N-terminal section; belongs to the uridine kinase family. The protein in the C-terminal section; belongs to the UPRTase family. Mg(2+) is required as a cofactor.

The enzyme catalyses UMP + diphosphate = 5-phospho-alpha-D-ribose 1-diphosphate + uracil. The catalysed reaction is cytidine + ATP = CMP + ADP + H(+). It carries out the reaction uridine + ATP = UMP + ADP + H(+). It participates in pyrimidine metabolism; UMP biosynthesis via salvage pathway; UMP from uracil: step 1/1. It functions in the pathway pyrimidine metabolism; CTP biosynthesis via salvage pathway; CTP from cytidine: step 1/3. Its pathway is pyrimidine metabolism; UMP biosynthesis via salvage pathway; UMP from uridine: step 1/1. With respect to regulation, allosterically activated by GTP. Involved in the pyrimidine salvage pathway. The uracil phosphoribosyltransferase (UPRT) activity, that catalyzes the conversion of uracil and 5-phospho-alpha-D-ribose 1-diphosphate (PRPP) to UMP and diphosphate, is unsure. This chain is Uridine kinase-like protein 4 (UKL4), found in Arabidopsis thaliana (Mouse-ear cress).